The chain runs to 138 residues: Large ribosomal subunit protein uL16 (138 aa).

The span at 1-19 (MLSPKRTKYRKAHKGRIHG) shows a compositional bias: basic residues. The tract at residues 1-21 (MLSPKRTKYRKAHKGRIHGNA) is disordered.

It belongs to the universal ribosomal protein uL16 family. As to quaternary structure, part of the 50S ribosomal subunit.

Its function is as follows. Binds 23S rRNA and is also seen to make contacts with the A and possibly P site tRNAs. The sequence is that of Large ribosomal subunit protein uL16 from Granulibacter bethesdensis (strain ATCC BAA-1260 / CGDNIH1).